Reading from the N-terminus, the 90-residue chain is Small ribosomal subunit protein bS16 (90 aa).

Belongs to the bacterial ribosomal protein bS16 family.

This Heliobacterium modesticaldum (strain ATCC 51547 / Ice1) protein is Small ribosomal subunit protein bS16.